A 205-amino-acid chain; its full sequence is Urease accessory protein UreE (205 aa).

Residues 178–196 are compositionally biased toward basic residues; the sequence is AHFHAGGHGHVHSGHGHGG. The segment at 178–205 is disordered; that stretch reads AHFHAGGHGHVHSGHGHGGKHGEHDAES.

Belongs to the UreE family.

Its subcellular location is the cytoplasm. Its function is as follows. Involved in urease metallocenter assembly. Binds nickel. Probably functions as a nickel donor during metallocenter assembly. The protein is Urease accessory protein UreE of Bordetella pertussis (strain Tohama I / ATCC BAA-589 / NCTC 13251).